Reading from the N-terminus, the 198-residue chain is Recombination protein RecR (198 aa).

A C4-type zinc finger spans residues 57-72 (CTVCGHITDTDPCYIC). In terms of domain architecture, Toprim spans 80 to 175 (TTICVVQDPK…KVTRIAHGLP (96 aa)).

Belongs to the RecR family.

May play a role in DNA repair. It seems to be involved in an RecBC-independent recombinational process of DNA repair. It may act with RecF and RecO. The protein is Recombination protein RecR of Geobacillus sp. (strain WCH70).